The following is a 199-amino-acid chain: Potassium-transporting ATPase KdpC subunit (199 aa).

The helical transmembrane segment at 7 to 27 (PAIVLLLALTLLTGLAYPLAM) threads the bilayer. A disordered region spans residues 67 to 86 (HGRPSATTAADPQDSSKTVP). A compositionally biased stretch (polar residues) spans 71–84 (SATTAADPQDSSKT).

The protein belongs to the KdpC family. In terms of assembly, the system is composed of three essential subunits: KdpA, KdpB and KdpC.

It localises to the cell inner membrane. Its function is as follows. Part of the high-affinity ATP-driven potassium transport (or Kdp) system, which catalyzes the hydrolysis of ATP coupled with the electrogenic transport of potassium into the cytoplasm. This subunit acts as a catalytic chaperone that increases the ATP-binding affinity of the ATP-hydrolyzing subunit KdpB by the formation of a transient KdpB/KdpC/ATP ternary complex. This Rhodopseudomonas palustris (strain BisB18) protein is Potassium-transporting ATPase KdpC subunit.